Consider the following 262-residue polypeptide: Malonyl-[acyl-carrier protein] O-methyltransferase (262 aa).

It belongs to the methyltransferase superfamily.

The catalysed reaction is malonyl-[ACP] + S-adenosyl-L-methionine = malonyl-[ACP] methyl ester + S-adenosyl-L-homocysteine. It participates in cofactor biosynthesis; biotin biosynthesis. Its function is as follows. Converts the free carboxyl group of a malonyl-thioester to its methyl ester by transfer of a methyl group from S-adenosyl-L-methionine (SAM). It allows to synthesize pimeloyl-ACP via the fatty acid synthetic pathway. In Erwinia pyrifoliae (strain DSM 12163 / CIP 106111 / Ep16/96), this protein is Malonyl-[acyl-carrier protein] O-methyltransferase.